A 256-amino-acid chain; its full sequence is Coiled-coil domain-containing protein 90B, mitochondrial (256 aa).

The N-terminal 42 residues, 1–42, are a transit peptide targeting the mitochondrion; sequence MRSRWIWRFLRPDGGGIRWTSTPHGRLSPALRRGFLTTTTKS. The stretch at 129-167 forms a coiled coil; it reads LEKSEFANLRAENEKMKIELDQVKQQLTNETSRIRADNK. Residues 231–253 form a helical membrane-spanning segment; the sequence is TIRYLAASVFTCLAIALGFYRFW.

This sequence belongs to the CCDC90 family. In terms of assembly, interacts with MCU.

It localises to the mitochondrion membrane. This is Coiled-coil domain-containing protein 90B, mitochondrial (Ccdc90b) from Mus musculus (Mouse).